Consider the following 383-residue polypeptide: UDP-N-acetylglucosamine--N-acetylmuramyl-(pentapeptide) pyrophosphoryl-undecaprenol N-acetylglucosamine transferase (383 aa).

UDP-N-acetyl-alpha-D-glucosamine contacts are provided by residues Thr-10 to Gly-12, Asn-124, Arg-165, Ser-190, Ile-245, and Gln-290. The tract at residues Pro-364–Ser-383 is disordered.

Belongs to the glycosyltransferase 28 family. MurG subfamily.

It localises to the cell inner membrane. It catalyses the reaction di-trans,octa-cis-undecaprenyl diphospho-N-acetyl-alpha-D-muramoyl-L-alanyl-D-glutamyl-meso-2,6-diaminopimeloyl-D-alanyl-D-alanine + UDP-N-acetyl-alpha-D-glucosamine = di-trans,octa-cis-undecaprenyl diphospho-[N-acetyl-alpha-D-glucosaminyl-(1-&gt;4)]-N-acetyl-alpha-D-muramoyl-L-alanyl-D-glutamyl-meso-2,6-diaminopimeloyl-D-alanyl-D-alanine + UDP + H(+). Its pathway is cell wall biogenesis; peptidoglycan biosynthesis. Functionally, cell wall formation. Catalyzes the transfer of a GlcNAc subunit on undecaprenyl-pyrophosphoryl-MurNAc-pentapeptide (lipid intermediate I) to form undecaprenyl-pyrophosphoryl-MurNAc-(pentapeptide)GlcNAc (lipid intermediate II). In Anaeromyxobacter dehalogenans (strain 2CP-C), this protein is UDP-N-acetylglucosamine--N-acetylmuramyl-(pentapeptide) pyrophosphoryl-undecaprenol N-acetylglucosamine transferase.